The sequence spans 608 residues: Chaperone protein HtpG (608 aa).

Residues 1-332 form an a; substrate-binding region; the sequence is MQFQTEVNQL…VEDLPLNVSR (332 aa). A b region spans residues 333–536; the sequence is EILQENQILK…KNKPDFAMQQ (204 aa). The c stretch occupies residues 537 to 608; that stretch reads LLKQMGQEQN…LTKIINKAFS (72 aa).

The protein belongs to the heat shock protein 90 family. In terms of assembly, homodimer.

Its subcellular location is the cytoplasm. Its function is as follows. Molecular chaperone. Has ATPase activity. The chain is Chaperone protein HtpG from Campylobacter jejuni (strain RM1221).